Consider the following 485-residue polypeptide: Elongation factor TuB, chloroplastic (485 aa).

A chloroplast-targeting transit peptide spans 1-76 (MASISAASAT…TTHPRRFTVR (76 aa)). Residues 86 to 290 (KPHVNIGTIG…NVDEYIPIPQ (205 aa)) form the tr-type G domain. The interval 95-102 (GHVDHGKT) is G1. GTP is bound at residue 95–102 (GHVDHGKT). The tract at residues 136–140 (GITIN) is G2. The tract at residues 157–160 (DCPG) is G3. GTP is bound by residues 157 to 161 (DCPGH) and 212 to 215 (NKQD). A G4 region spans residues 212–215 (NKQD). Residues 250–252 (SAL) are G5.

Belongs to the TRAFAC class translation factor GTPase superfamily. Classic translation factor GTPase family. EF-Tu/EF-1A subfamily.

It is found in the plastid. Its subcellular location is the chloroplast. This protein promotes the GTP-dependent binding of aminoacyl-tRNA to the A-site of ribosomes during protein biosynthesis. In Nicotiana sylvestris (Wood tobacco), this protein is Elongation factor TuB, chloroplastic (TUFB).